Reading from the N-terminus, the 221-residue chain is Pyridoxal phosphate homeostasis protein (221 aa).

Lys26 is subject to N6-(pyridoxal phosphate)lysine.

Belongs to the pyridoxal phosphate-binding protein YggS/PROSC family.

Pyridoxal 5'-phosphate (PLP)-binding protein, which is involved in PLP homeostasis. This Corynebacterium glutamicum (strain ATCC 13032 / DSM 20300 / JCM 1318 / BCRC 11384 / CCUG 27702 / LMG 3730 / NBRC 12168 / NCIMB 10025 / NRRL B-2784 / 534) protein is Pyridoxal phosphate homeostasis protein.